The primary structure comprises 1005 residues: Ephrin type-A receptor 8 (1005 aa).

Positions 1-27 (MAPARGRLPPALWVVTAAAAAATCVSA) are cleaved as a signal peptide. Residues 28–542 (ARGEVNLLDT…KPRPRYDTRT (515 aa)) lie on the Extracellular side of the membrane. The region spanning 31-209 (EVNLLDTSTI…YYKKCPAMVR (179 aa)) is the Eph LBD domain. Fibronectin type-III domains lie at 328–438 (PPSA…TNQA) and 439–534 (APSQ…TGKP). Residues asparagine 340, asparagine 407, and asparagine 432 are each glycosylated (N-linked (GlcNAc...) asparagine). A helical membrane pass occupies residues 543–563 (IVWICLTLITGLVVLLLLLIC). The tract at residues 564–570 (KKRHCGY) is mediates interaction with ANKS1A and ANKS1B. Residues 564–1005 (KKRHCGYSKA…TSTQGPRRHL (442 aa)) are Cytoplasmic-facing. The mediates interaction with PIK3CG and required for endocytosis stretch occupies residues 589-644 (APPPVFLPLHHPPGKLPEPQFYAEPHTYEEPGRAGRSFTREIEASRIHIEKIIGSG). Tyrosine 616 bears the Phosphotyrosine; by autocatalysis mark. Residues 635–896 (IHIEKIIGSG…QIVSVLDALI (262 aa)) enclose the Protein kinase domain. ATP-binding positions include 641 to 649 (IGSGDSGEV) and lysine 667. The Proton acceptor role is filled by aspartate 760. Residue tyrosine 839 is modified to Phosphotyrosine; by autocatalysis. Positions 930-994 (GGGLTVGDWL…LGSIQTMRAQ (65 aa)) constitute an SAM domain. Positions 1003 to 1005 (RHL) match the PDZ-binding motif.

The protein belongs to the protein kinase superfamily. Tyr protein kinase family. Ephrin receptor subfamily. In terms of assembly, heterotetramer upon binding of the ligand. The heterotetramer is composed of an ephrin dimer and a receptor dimer. Oligomerization is probably required to induce biological responses. May also form heterodimers with other ephrin receptors. Interacts with FYN; possible downstream effector of EPHA8 in regulation of cell adhesion. Interacts with PIK3CG; regulates integrin-mediated cell adhesion to substrate. Interacts with TIAM1; regulates clathrin-mediated endocytosis of EPHA8. Interacts with ANKS1A and ANKS1B; EPHA8 kinase activity-independent but stimulated by EPHA8 ubiquitination. In terms of processing, phosphorylated. Phosphorylation is stimulated upon binding of its ligands including EFNA2, EFNA3 and EFNA5. Autophosphorylation on Tyr-616 is critical for association with FYN. Autophosphorylation on Tyr-839 modulates tyrosine kinase activity. Ubiquitinated. Ubiquitination by CBL regulates the receptor stability and activity through proteasomal degradation. ANKS1A prevents ubiquitination and degradation.

Its subcellular location is the cell membrane. The protein resides in the cell projection. The protein localises to the early endosome membrane. It catalyses the reaction L-tyrosyl-[protein] + ATP = O-phospho-L-tyrosyl-[protein] + ADP + H(+). Its function is as follows. Receptor tyrosine kinase which binds promiscuously GPI-anchored ephrin-A family ligands residing on adjacent cells, leading to contact-dependent bidirectional signaling into neighboring cells. The signaling pathway downstream of the receptor is referred to as forward signaling while the signaling pathway downstream of the ephrin ligand is referred to as reverse signaling. The GPI-anchored ephrin-A EFNA2, EFNA3, and EFNA5 are able to activate EPHA8 through phosphorylation. With EFNA5 may regulate integrin-mediated cell adhesion and migration on fibronectin substrate but also neurite outgrowth. During development of the nervous system also plays a role in axon guidance. Downstream effectors of the EPHA8 signaling pathway include FYN which promotes cell adhesion upon activation by EPHA8 and the MAP kinases in the stimulation of neurite outgrowth. In Homo sapiens (Human), this protein is Ephrin type-A receptor 8 (EPHA8).